We begin with the raw amino-acid sequence, 246 residues long: Large ribosomal subunit protein uL3 (246 aa).

An N5-methylglutamine modification is found at Gln-151.

The protein belongs to the universal ribosomal protein uL3 family. As to quaternary structure, part of the 50S ribosomal subunit. Forms a cluster with proteins L14 and L19. Post-translationally, methylated by PrmB.

In terms of biological role, one of the primary rRNA binding proteins, it binds directly near the 3'-end of the 23S rRNA, where it nucleates assembly of the 50S subunit. This is Large ribosomal subunit protein uL3 from Bartonella henselae (strain ATCC 49882 / DSM 28221 / CCUG 30454 / Houston 1) (Rochalimaea henselae).